Consider the following 629-residue polypeptide: tRNA uridine 5-carboxymethylaminomethyl modification enzyme MnmG (629 aa).

13 to 18 (GGGHAG) provides a ligand contact to FAD. Position 273–287 (273–287 (GPRYCPSIEDKIMRF)) interacts with NAD(+).

This sequence belongs to the MnmG family. As to quaternary structure, homodimer. Heterotetramer of two MnmE and two MnmG subunits. It depends on FAD as a cofactor.

It localises to the cytoplasm. NAD-binding protein involved in the addition of a carboxymethylaminomethyl (cmnm) group at the wobble position (U34) of certain tRNAs, forming tRNA-cmnm(5)s(2)U34. This is tRNA uridine 5-carboxymethylaminomethyl modification enzyme MnmG from Tolumonas auensis (strain DSM 9187 / NBRC 110442 / TA 4).